A 189-amino-acid polypeptide reads, in one-letter code: Peptidyl-tRNA hydrolase (189 aa).

Position 14 (Tyr-14) interacts with tRNA. His-19 serves as the catalytic Proton acceptor. Tyr-64, Asn-66, and Asn-112 together coordinate tRNA.

This sequence belongs to the PTH family. As to quaternary structure, monomer.

Its subcellular location is the cytoplasm. The catalysed reaction is an N-acyl-L-alpha-aminoacyl-tRNA + H2O = an N-acyl-L-amino acid + a tRNA + H(+). Its function is as follows. Hydrolyzes ribosome-free peptidyl-tRNAs (with 1 or more amino acids incorporated), which drop off the ribosome during protein synthesis, or as a result of ribosome stalling. Catalyzes the release of premature peptidyl moieties from peptidyl-tRNA molecules trapped in stalled 50S ribosomal subunits, and thus maintains levels of free tRNAs and 50S ribosomes. The sequence is that of Peptidyl-tRNA hydrolase from Clostridium botulinum (strain Okra / Type B1).